Reading from the N-terminus, the 211-residue chain is Ion-translocating oxidoreductase complex subunit G (211 aa).

Residues 9–29 traverse the membrane as a helical segment; sequence GLTLAIFACATTGLVAMTQYL. FMN phosphoryl threonine is present on threonine 175.

Belongs to the RnfG family. As to quaternary structure, the complex is composed of six subunits: RnfA, RnfB, RnfC, RnfD, RnfE and RnfG. FMN is required as a cofactor.

It localises to the cell inner membrane. Part of a membrane-bound complex that couples electron transfer with translocation of ions across the membrane. In Vibrio vulnificus (strain YJ016), this protein is Ion-translocating oxidoreductase complex subunit G.